A 99-amino-acid chain; its full sequence is Prostate and testis expressed protein 4 (99 aa).

The signal sequence occupies residues 1–23; that stretch reads MNSVTKISTLLIVILSFLCFVEG. The 76-residue stretch at 24-99 folds into the UPAR/Ly6 domain; that stretch reads LICNSCEKSR…CCEKNLCNSF (76 aa). 4 cysteine pairs are disulfide-bonded: Cys26–Cys52, Cys29–Cys37, Cys44–Cys70, and Cys74–Cys90.

Expressed in prostate, testis, eye, kidney and skeletal muscle. Expressed in the dorsal lobe of prostate. Not expressed in the ventral lobe of prostate.

The protein localises to the secreted. Its function is as follows. Enhances sperm motility. Binds to calmodulin and inhibits calcium transport into spermatozoa. May modulate the function of nicotinic acetylcholine receptors. The protein is Prostate and testis expressed protein 4 (Pate4) of Mus musculus (Mouse).